Here is a 419-residue protein sequence, read N- to C-terminus: Ubiquitin-like modifier-activating enzyme 5 (419 aa).

Residues 18-47 form a disordered region; sequence NRLGNVKKDHPLESSSNSKPTHQPKSPAPY. Residues 30–41 are compositionally biased toward polar residues; sequence ESSSNSKPTHQP. Residues Gly-94, Asp-115, Lys-138, Asn-161, and Asn-194 each contribute to the ATP site. Positions 236 and 239 each coordinate Zn(2+). Catalysis depends on Cys-260, which acts as the Glycyl thioester intermediate. Zn(2+) contacts are provided by Cys-313 and Cys-318.

The protein belongs to the ubiquitin-activating E1 family. UBA5 subfamily. In terms of assembly, interacts with ufc-1. Expressed in the intestine.

Functionally, E1-like enzyme which activates ufm-1. Required for interaction between ufm-1 and ufc-1. The protein is Ubiquitin-like modifier-activating enzyme 5 of Caenorhabditis elegans.